Consider the following 346-residue polypeptide: MAEITAALVKELREKSGAGVMDAKKALVETDGDIEKAIELLREKGMAKAAKKADRVAAEGLTGVYVDGNVAAVVEVNAETDFVAKNAQFVELVNTTAKVIAEGKPADNEAALKLAMPSGETLEEAYVNATATIGEKISFRRFALVEKTDAQAFGAYQHNGGRIGVISVVDGGDETLAKQISMHIAAMKPTVLSYTELDEQFVKDELAQINHKIEQDNESRAMVNKPVLPLLKYGSKAQLTDEVIAAAEEAIKAELAAEGKPEKIWDKIIPGKMDRFLLDNTQVDQAYTLLAQVYIMDDSKTVEAYLNSVNASVVEFARFEVGEGIEKASNDFEAEVAATMAAALGK.

The involved in Mg(2+) ion dislocation from EF-Tu stretch occupies residues 80 to 83 (TDFV).

It belongs to the EF-Ts family.

The protein localises to the cytoplasm. Functionally, associates with the EF-Tu.GDP complex and induces the exchange of GDP to GTP. It remains bound to the aminoacyl-tRNA.EF-Tu.GTP complex up to the GTP hydrolysis stage on the ribosome. In Streptococcus suis (strain 98HAH33), this protein is Elongation factor Ts.